A 1222-amino-acid polypeptide reads, in one-letter code: A disintegrin and metalloproteinase with thrombospondin motifs 16 (1222 aa).

Positions methionine 1–glutamine 20 are cleaved as a signal peptide. The propeptide occupies glutamine 21 to arginine 277. N-linked (GlcNAc...) asparagine glycans are attached at residues asparagine 154 and asparagine 190. Residues histidine 245 to tyrosine 253 carry the Cysteine switch motif. Cysteine 247 contributes to the Zn(2+) binding site. A Peptidase M12B domain is found at leucine 288–proline 493. An N-linked (GlcNAc...) asparagine glycan is attached at asparagine 308. Intrachain disulfides connect cysteine 364–cysteine 415, cysteine 390–cysteine 397, cysteine 409–cysteine 488, cysteine 448–cysteine 472, cysteine 516–cysteine 541, cysteine 527–cysteine 548, cysteine 536–cysteine 567, cysteine 561–cysteine 572, cysteine 596–cysteine 633, cysteine 600–cysteine 638, and cysteine 611–cysteine 623. A Zn(2+)-binding site is contributed by histidine 431. Glutamate 432 is an active-site residue. Residues histidine 435 and histidine 441 each contribute to the Zn(2+) site. The 90-residue stretch at lysine 494 to threonine 583 folds into the Disintegrin domain. A TSP type-1 1 domain is found at histidine 584–proline 639. N-linked (GlcNAc...) asparagine glycans are attached at residues asparagine 739, asparagine 778, asparagine 825, asparagine 833, asparagine 903, and asparagine 933. Positions threonine 745 to serine 871 are spacer. TSP type-1 domains follow at residues tryptophan 872–cysteine 920, cysteine 925–proline 985, proline 986–histidine 1046, lysine 1049–proline 1113, and arginine 1125–proline 1179. In terms of domain architecture, PLAC spans arginine 1184 to asparagine 1221.

Zn(2+) serves as cofactor. In terms of processing, the precursor is cleaved by a furin endopeptidase. Post-translationally, glycosylated. Can be O-fucosylated by POFUT2 on a serine or a threonine residue found within the consensus sequence C1-X(2)-(S/T)-C2-G of the TSP type-1 repeat domains where C1 and C2 are the first and second cysteine residue of the repeat, respectively. Fucosylated repeats can then be further glycosylated by the addition of a beta-1,3-glucose residue by the glucosyltransferase, B3GALTL. Fucosylation mediates the efficient secretion of ADAMTS family members. Can also be C-glycosylated with one or two mannose molecules on tryptophan residues within the consensus sequence W-X-X-W of the TPRs, and N-glycosylated. These other glycosylations can also facilitate secretion.

It localises to the secreted. The protein localises to the extracellular space. Its subcellular location is the extracellular matrix. The protein is A disintegrin and metalloproteinase with thrombospondin motifs 16 (Adamts16) of Mus musculus (Mouse).